A 97-amino-acid polypeptide reads, in one-letter code: Putative defensin-like protein 237 (97 aa).

The signal sequence occupies residues 1–23 (MRHATSPIVFCFLIFLVMNHVKG). 4 cysteine pairs are disulfide-bonded: Cys-30–Cys-94, Cys-40–Cys-71, Cys-48–Cys-84, and Cys-69–Cys-86.

Belongs to the DEFL family.

It localises to the secreted. The sequence is that of Putative defensin-like protein 237 (SCRL21) from Arabidopsis thaliana (Mouse-ear cress).